Consider the following 396-residue polypeptide: Putative cytochrome P450 YjiB (396 aa).

Cysteine 349 contributes to the heme binding site.

Belongs to the cytochrome P450 family. The cofactor is heme.

The sequence is that of Putative cytochrome P450 YjiB (yjiB) from Bacillus subtilis (strain 168).